The sequence spans 239 residues: tRNA (guanine-N(7)-)-methyltransferase (239 aa).

S-adenosyl-L-methionine is bound by residues Glu69, Glu94, Asp121, and Asp144. Asp144 is an active-site residue. Residue Lys148 coordinates substrate. Residues 150-155 (RHNKRR) form an interaction with RNA region. Substrate-binding positions include Asp180 and 217 to 220 (TKFE).

Belongs to the class I-like SAM-binding methyltransferase superfamily. TrmB family. In terms of assembly, monomer.

The catalysed reaction is guanosine(46) in tRNA + S-adenosyl-L-methionine = N(7)-methylguanosine(46) in tRNA + S-adenosyl-L-homocysteine. It functions in the pathway tRNA modification; N(7)-methylguanine-tRNA biosynthesis. In terms of biological role, catalyzes the formation of N(7)-methylguanine at position 46 (m7G46) in tRNA. This is tRNA (guanine-N(7)-)-methyltransferase from Shigella flexneri serotype 5b (strain 8401).